Consider the following 908-residue polypeptide: Protein translocase subunit SecA (908 aa).

Residues Gln87, Gly105–Thr109, and Asp512 contribute to the ATP site. A disordered region spans residues Gln876–Ser908. Residues Cys892, Cys894, Cys903, and His904 each coordinate Zn(2+). Residues Arg898–Ser908 show a composition bias toward basic residues.

It belongs to the SecA family. Monomer and homodimer. Part of the essential Sec protein translocation apparatus which comprises SecA, SecYEG and auxiliary proteins SecDF-YajC and YidC. Requires Zn(2+) as cofactor.

It is found in the cell inner membrane. Its subcellular location is the cytoplasm. It carries out the reaction ATP + H2O + cellular proteinSide 1 = ADP + phosphate + cellular proteinSide 2.. In terms of biological role, part of the Sec protein translocase complex. Interacts with the SecYEG preprotein conducting channel. Has a central role in coupling the hydrolysis of ATP to the transfer of proteins into and across the cell membrane, serving both as a receptor for the preprotein-SecB complex and as an ATP-driven molecular motor driving the stepwise translocation of polypeptide chains across the membrane. The chain is Protein translocase subunit SecA from Shewanella baltica (strain OS185).